Reading from the N-terminus, the 153-residue chain is FAD synthase (153 aa).

ATP contacts are provided by residues 9–10 (TF), 14–17 (HPGH), and aspartate 92.

It belongs to the archaeal FAD synthase family. In terms of assembly, homodimer. A divalent metal cation serves as cofactor.

The catalysed reaction is FMN + ATP + H(+) = FAD + diphosphate. It participates in cofactor biosynthesis; FAD biosynthesis; FAD from FMN: step 1/1. Catalyzes the transfer of the AMP portion of ATP to flavin mononucleotide (FMN) to produce flavin adenine dinucleotide (FAD) coenzyme. The polypeptide is FAD synthase (Halorubrum lacusprofundi (strain ATCC 49239 / DSM 5036 / JCM 8891 / ACAM 34)).